A 449-amino-acid chain; its full sequence is Cytochrome P450 monooxygenase iliC (449 aa).

A helical membrane pass occupies residues 28–44 (TFAITFMGVKQICTIEG). Cysteine 397 contributes to the heme binding site.

The protein belongs to the cytochrome P450 family. Heme serves as cofactor.

The protein localises to the membrane. The enzyme catalyses (3E,5S)-3-[(2E,4E,8S,10E,12Z)-1-hydroxy-4,8-dimethyltetradeca-2,4,10,12-tetraen-1-ylidene]-5-[(4-hydroxyphenyl)methyl]pyrrolidine-2,4-dione + reduced [NADPH--hemoprotein reductase] + O2 = 3-[(2E,4E,8S,10E,12Z)-4,8-dimethyltetradeca-2,4,10,12-tetraenoyl]-4-hydroxy-5-(4-hydroxyphenyl)-1,2-dihydropyridin-2-one + oxidized [NADPH--hemoprotein reductase] + 2 H2O. The protein operates within mycotoxin biosynthesis. Cytochrome P450 monooxygenase; part of the gene cluster that mediates the biosynthesis of ilicicolin H, a 4-hydroxy-2-pyridonealkaloid that has potent and broad antifungal activities by inhibiting the mitochondrial respiration chain. IliC catalyzes the ring expansion of the tetramate intermediate to the acyclic 2-pyridone intermediate that contains the trans bis-diene chain. The biosynthesis of ilicicolin H starts with formation of the tetramic acid by the hybrid PKS-NRPS synthetase iliA with the partnering trans-enoyl reductase iliB since iliA lacks a designated enoylreductase (ER) domain. The cytochrome P450 monooxygenase iliC then catalyzes the ring expansion of the tetramate to the acyclic 2-pyridone. The pericyclase iliD further converts the acyclic 2-pyridone into 8-epi-ilicicolin H. 8-epi-ilicicolin H might then spontaneously convert to ilicicolin H since ilicicolin H is produced in the absence of the epimerase iliE, in contrast to what was observed for the Talaromyces variabilis ilicolin H biosynthetic pathway. The polypeptide is Cytochrome P450 monooxygenase iliC (Hypocrea jecorina (strain QM6a) (Trichoderma reesei)).